Consider the following 169-residue polypeptide: MTLQYQTIADCVGNTPLVRLQRMAGNTSNTLLLKLEGNNPAGSVKDRPALSMITRAELRGQIHPGDTLIEATSGNTGIALAMAAAIKGYRMILIMPDNSSAERKAAMTAYGAELISVSKDDGMEGARDLAERMQAEGRGKVLDQFANGDNPEAHYTSTGPEIWRQTGGT.

Lysine 45 carries the N6-(pyridoxal phosphate)lysine modification. Asparagine 75 serves as a coordination point for pyridoxal 5'-phosphate. The tract at residues 146–169 is disordered; that stretch reads ANGDNPEAHYTSTGPEIWRQTGGT.

This sequence belongs to the cysteine synthase/cystathionine beta-synthase family. It depends on pyridoxal 5'-phosphate as a cofactor.

The catalysed reaction is O-acetyl-L-serine + hydrogen sulfide = L-cysteine + acetate. Its pathway is amino-acid biosynthesis; L-cysteine biosynthesis; L-cysteine from L-serine: step 2/2. The protein is Cysteine synthase B (cysM) of Pseudomonas syringae pv. syringae.